The sequence spans 377 residues: WAT1-related protein At3g56620 (377 aa).

10 helical membrane passes run 13–33, 40–60, 67–87, 102–122, 142–162, 183–203, 210–230, 235–255, 274–294, and 299–319; these read FAMVCLQFGYAGMNLVTKVVL, YVLVAYRNAFATAAIAPFALL, PKMTFPIFMQIFVLALLGPLI, TFAGAVTNIVPALTFIISIIC, LVIVVGAMLMILFKIPLITFL, VFLLIASFSWASFFVLQAATL, LSLSTMVCFMGTLQSTALTFV, LSAWNIGFDMNLLASAYAGIM, IFVTAFNPLVVIIGSIIGFLI, and LNLGGVLGMAILVVGVCTVLW. EamA domains lie at 22 to 152 and 190 to 318; these read YAGM…MLMI and FSWA…CTVL.

Belongs to the drug/metabolite transporter (DMT) superfamily. Plant drug/metabolite exporter (P-DME) (TC 2.A.7.4) family.

The protein localises to the membrane. The chain is WAT1-related protein At3g56620 from Arabidopsis thaliana (Mouse-ear cress).